A 140-amino-acid polypeptide reads, in one-letter code: Mercuric transport protein MerC (140 aa).

Residues 2–10 (GLMTRIADK) are Cytoplasmic-facing. A helical membrane pass occupies residues 11–31 (TGALGSVVSAMGCAACFPALA). 2 residues coordinate Hg(2+): Gly22 and Ala25. Over 32 to 46 (SFGAAIGLGFLSQYE) the chain is Periplasmic. The helical transmembrane segment at 47 to 67 (GLFISRLLPLFAALAFLANAL) threads the bilayer. Topologically, residues 68–78 (GWFSHRQWLRS) are cytoplasmic. The chain crosses the membrane as a helical span at residues 79–99 (LLGMIGPAIVFAATVWLLGNW). The Periplasmic segment spans residues 100 to 106 (WTANLMY). The helical transmembrane segment at 107 to 127 (VGLALMIGVSIWDFVSPAHRR) threads the bilayer. Residues 128–140 (CGPDGCELPAKRL) are Cytoplasmic-facing.

Its subcellular location is the cell inner membrane. Uptake of Hg(2+) is decreased by iodoacetamide and iodoacetate, and is completely inhibited by the thiol-modifying reagent N-ethylmaleimide (NEM). In terms of biological role, involved in mercuric ion uptake and binding. MerC-mediated Hg(2+) uptake does not require MerP. This Shigella flexneri protein is Mercuric transport protein MerC.